A 471-amino-acid chain; its full sequence is V-type ATP synthase beta chain (471 aa).

Belongs to the ATPase alpha/beta chains family.

Produces ATP from ADP in the presence of a proton gradient across the membrane. The V-type beta chain is a regulatory subunit. The polypeptide is V-type ATP synthase beta chain (Streptococcus pyogenes serotype M28 (strain MGAS6180)).